Consider the following 244-residue polypeptide: DnaJ homolog subfamily C member 4 (244 aa).

Residues 37-102 (NYYELLGVHP…ESRRNYDHQL (66 aa)) form the J domain. A disordered region spans residues 96–127 (RNYDHQLHSASPPKSSGSTAEPKYTQQTHSSW). Positions 103–127 (HSASPPKSSGSTAEPKYTQQTHSSW) are enriched in polar residues. Residues 159 to 178 (VLGYCLLLMVAGMGLHYVAF) traverse the membrane as a helical segment. Residues 208 to 244 (RANRARIQQERQQRQQPRAEPSLPPESSRIMPQDTSP) form a disordered region.

It localises to the membrane. The polypeptide is DnaJ homolog subfamily C member 4 (Dnajc4) (Mus musculus (Mouse)).